The primary structure comprises 330 residues: RNA polymerase sigma factor RpoS (330 aa).

Residues 56-89 form a sigma-70 factor domain-1 region; that stretch reads DATQLYLGEIGYSPLLTAEEEVYFARRALRGDVA. The interval 94–164 is sigma-70 factor domain-2; sequence MIESNLRLVV…ERAIMNQTRT (71 aa). The Interaction with polymerase core subunit RpoC motif lies at 118–121; sequence DLIE. Residues 174–249 form a sigma-70 factor domain-3 region; the sequence is ELNVYLRTAR…DEKENGPEDT (76 aa). The segment at 262-315 is sigma-70 factor domain-4; the sequence is WLFELNAKQREVLARRFGLLGYEAATLEDVGREIGLTRERVRQIQVEGLRRLRE. The segment at residues 288–307 is a DNA-binding region (H-T-H motif); that stretch reads LEDVGREIGLTRERVRQIQV.

It belongs to the sigma-70 factor family. RpoS subfamily. As to quaternary structure, interacts with the RNA polymerase core enzyme.

The protein resides in the cytoplasm. In terms of biological role, sigma factors are initiation factors that promote the attachment of RNA polymerase to specific initiation sites and are then released. This sigma factor is the master transcriptional regulator of the stationary phase and the general stress response. In Shigella flexneri, this protein is RNA polymerase sigma factor RpoS.